The sequence spans 103 residues: Large ribosomal subunit protein bL21 (103 aa).

Belongs to the bacterial ribosomal protein bL21 family. Part of the 50S ribosomal subunit. Contacts protein L20.

In terms of biological role, this protein binds to 23S rRNA in the presence of protein L20. This chain is Large ribosomal subunit protein bL21, found in Mycobacterium sp. (strain JLS).